The sequence spans 149 residues: 3-hydroxyacyl-[acyl-carrier-protein] dehydratase FabZ (149 aa).

His-48 is a catalytic residue.

It belongs to the thioester dehydratase family. FabZ subfamily.

It localises to the cytoplasm. It catalyses the reaction a (3R)-hydroxyacyl-[ACP] = a (2E)-enoyl-[ACP] + H2O. Involved in unsaturated fatty acids biosynthesis. Catalyzes the dehydration of short chain beta-hydroxyacyl-ACPs and long chain saturated and unsaturated beta-hydroxyacyl-ACPs. The polypeptide is 3-hydroxyacyl-[acyl-carrier-protein] dehydratase FabZ (Thermomicrobium roseum (strain ATCC 27502 / DSM 5159 / P-2)).